We begin with the raw amino-acid sequence, 258 residues long: Imidazole glycerol phosphate synthase subunit HisF (258 aa).

Residues aspartate 11 and aspartate 130 contribute to the active site.

It belongs to the HisA/HisF family. As to quaternary structure, heterodimer of HisH and HisF.

The protein localises to the cytoplasm. The catalysed reaction is 5-[(5-phospho-1-deoxy-D-ribulos-1-ylimino)methylamino]-1-(5-phospho-beta-D-ribosyl)imidazole-4-carboxamide + L-glutamine = D-erythro-1-(imidazol-4-yl)glycerol 3-phosphate + 5-amino-1-(5-phospho-beta-D-ribosyl)imidazole-4-carboxamide + L-glutamate + H(+). The protein operates within amino-acid biosynthesis; L-histidine biosynthesis; L-histidine from 5-phospho-alpha-D-ribose 1-diphosphate: step 5/9. Its function is as follows. IGPS catalyzes the conversion of PRFAR and glutamine to IGP, AICAR and glutamate. The HisF subunit catalyzes the cyclization activity that produces IGP and AICAR from PRFAR using the ammonia provided by the HisH subunit. The polypeptide is Imidazole glycerol phosphate synthase subunit HisF (Buchnera aphidicola subsp. Baizongia pistaciae (strain Bp)).